Consider the following 343-residue polypeptide: ATP-dependent (S)-NAD(P)H-hydrate dehydratase (343 aa).

The transit peptide at 1 to 42 (MAVHACGAAAAVVALLSAAIALQWSPLYAVLQRALSLHTAHA) directs the protein to the mitochondrion. The YjeF C-terminal domain maps to 49–340 (LFQLVRNIVP…TEVGTAFSRL (292 aa)). Position 63 is an N6-acetyllysine (K63). Y81 carries the post-translational modification Phosphotyrosine. (6S)-NADPHX is bound by residues G149 and 202-208 (NHVEFSR). A Phosphoserine modification is found at S216. ATP-binding positions include 242 to 246 (KGEQD) and 261 to 270 (GSSRRCGGQG). Position 271 (D271) interacts with (6S)-NADPHX.

This sequence belongs to the NnrD/CARKD family. The cofactor is Mg(2+).

Its subcellular location is the mitochondrion. The enzyme catalyses (6S)-NADHX + ATP = ADP + phosphate + NADH + H(+). The catalysed reaction is (6S)-NADPHX + ATP = ADP + phosphate + NADPH + H(+). Its function is as follows. Catalyzes the dehydration of the S-form of NAD(P)HX at the expense of ATP, which is converted to ADP. Together with NAD(P)HX epimerase, which catalyzes the epimerization of the S- and R-forms, the enzyme allows the repair of both epimers of NAD(P)HX, a damaged form of NAD(P)H that is a result of enzymatic or heat-dependent hydration. The polypeptide is ATP-dependent (S)-NAD(P)H-hydrate dehydratase (Mus musculus (Mouse)).